A 117-amino-acid chain; its full sequence is Glycoprotein hormones alpha chain (117 aa).

Positions 1 to 23 (MGSVKSAGLSLLLLSFLLYVADS) are cleaved as a signal peptide. Disulfide bonds link Cys-34-Cys-57, Cys-37-Cys-86, Cys-54-Cys-107, Cys-58-Cys-109, and Cys-85-Cys-112. 2 N-linked (GlcNAc...) asparagine glycosylation sites follow: Asn-78 and Asn-103.

The protein belongs to the glycoprotein hormones subunit alpha family. As to quaternary structure, heterodimer. Glycoprotein hormones are heterodimers composed of a common alpha chain described here and a unique beta chain which confers their biological specificity to the different hormones.

Its subcellular location is the secreted. Its function is as follows. Shared alpha chain of heterodimeric glycoprotein hormones. These hormones bind specific receptors on target cells that in turn activate downstream signaling pathways. Involved in gametogenesis and steroidogenesis. This is Glycoprotein hormones alpha chain (cga) from Acanthopagrus latus (Yellowfin seabream).